A 424-amino-acid polypeptide reads, in one-letter code: Serine--tRNA ligase (424 aa).

Residue 230–232 (TAE) coordinates L-serine. ATP is bound at residue 261 to 263 (RSE). Glu284 is a binding site for L-serine. ATP is bound at residue 348–351 (EISS). Position 384 (Ser384) interacts with L-serine.

The protein belongs to the class-II aminoacyl-tRNA synthetase family. Type-1 seryl-tRNA synthetase subfamily. As to quaternary structure, homodimer. The tRNA molecule binds across the dimer.

The protein localises to the cytoplasm. It catalyses the reaction tRNA(Ser) + L-serine + ATP = L-seryl-tRNA(Ser) + AMP + diphosphate + H(+). The catalysed reaction is tRNA(Sec) + L-serine + ATP = L-seryl-tRNA(Sec) + AMP + diphosphate + H(+). The protein operates within aminoacyl-tRNA biosynthesis; selenocysteinyl-tRNA(Sec) biosynthesis; L-seryl-tRNA(Sec) from L-serine and tRNA(Sec): step 1/1. In terms of biological role, catalyzes the attachment of serine to tRNA(Ser). Is also able to aminoacylate tRNA(Sec) with serine, to form the misacylated tRNA L-seryl-tRNA(Sec), which will be further converted into selenocysteinyl-tRNA(Sec). The polypeptide is Serine--tRNA ligase (Streptococcus pneumoniae serotype 19F (strain G54)).